Consider the following 222-residue polypeptide: Octanoyltransferase (222 aa).

The BPL/LPL catalytic domain maps to 34–214 (GEAPSTVLLL…EFRKHEEALV (181 aa)). Substrate-binding positions include 72–79 (RGGKLTWH), 144–146 (AIG), and 157–159 (GVA). The active-site Acyl-thioester intermediate is Cys-175.

This sequence belongs to the LipB family.

The protein resides in the cytoplasm. It carries out the reaction octanoyl-[ACP] + L-lysyl-[protein] = N(6)-octanoyl-L-lysyl-[protein] + holo-[ACP] + H(+). The protein operates within protein modification; protein lipoylation via endogenous pathway; protein N(6)-(lipoyl)lysine from octanoyl-[acyl-carrier-protein]: step 1/2. Its function is as follows. Catalyzes the transfer of endogenously produced octanoic acid from octanoyl-acyl-carrier-protein onto the lipoyl domains of lipoate-dependent enzymes. Lipoyl-ACP can also act as a substrate although octanoyl-ACP is likely to be the physiological substrate. The sequence is that of Octanoyltransferase from Pseudarthrobacter chlorophenolicus (strain ATCC 700700 / DSM 12829 / CIP 107037 / JCM 12360 / KCTC 9906 / NCIMB 13794 / A6) (Arthrobacter chlorophenolicus).